The primary structure comprises 450 residues: Tubulin alpha chain (450 aa).

A GTP-binding site is contributed by glutamine 11. At lysine 40 the chain carries N6-acetyllysine. GTP-binding residues include glutamate 71, serine 140, glycine 144, threonine 145, threonine 179, asparagine 206, and asparagine 228. Residue glutamate 71 coordinates Mg(2+). The active site involves glutamate 254.

The protein belongs to the tubulin family. In terms of assembly, dimer of alpha and beta chains. A typical microtubule is a hollow water-filled tube with an outer diameter of 25 nm and an inner diameter of 15 nM. Alpha-beta heterodimers associate head-to-tail to form protofilaments running lengthwise along the microtubule wall with the beta-tubulin subunit facing the microtubule plus end conferring a structural polarity. Microtubules usually have 13 protofilaments but different protofilament numbers can be found in some organisms and specialized cells. The cofactor is Mg(2+). Post-translationally, undergoes a tyrosination/detyrosination cycle, the cyclic removal and re-addition of a C-terminal tyrosine residue by the enzymes tubulin tyrosine carboxypeptidase (TTCP) and tubulin tyrosine ligase (TTL), respectively. In terms of processing, acetylation of alpha chains at Lys-40 stabilizes microtubules and affects affinity and processivity of microtubule motors. This modification has a role in multiple cellular functions, ranging from cell motility, cell cycle progression or cell differentiation to intracellular trafficking and signaling.

The protein localises to the cytoplasm. The protein resides in the cytoskeleton. The catalysed reaction is GTP + H2O = GDP + phosphate + H(+). In terms of biological role, tubulin is the major constituent of microtubules, a cylinder consisting of laterally associated linear protofilaments composed of alpha- and beta-tubulin heterodimers. Microtubules grow by the addition of GTP-tubulin dimers to the microtubule end, where a stabilizing cap forms. Below the cap, tubulin dimers are in GDP-bound state, owing to GTPase activity of alpha-tubulin. This Haemonchus contortus (Barber pole worm) protein is Tubulin alpha chain.